Reading from the N-terminus, the 336-residue chain is tRNA N6-adenosine threonylcarbamoyltransferase (336 aa).

Residues His-115, His-119, and Tyr-136 each contribute to the Fe cation site. Residues 136–140 (YVAGG), Asp-168, Glu-185, and Ser-266 contribute to the substrate site. Asp-294 serves as a coordination point for Fe cation.

The protein belongs to the KAE1 / TsaD family. The cofactor is Fe(2+).

The protein resides in the cytoplasm. It catalyses the reaction L-threonylcarbamoyladenylate + adenosine(37) in tRNA = N(6)-L-threonylcarbamoyladenosine(37) in tRNA + AMP + H(+). In terms of biological role, required for the formation of a threonylcarbamoyl group on adenosine at position 37 (t(6)A37) in tRNAs that read codons beginning with adenine. Is probably involved in the transfer of the threonylcarbamoyl moiety of threonylcarbamoyl-AMP (TC-AMP) to the N6 group of A37. In Thermofilum pendens (strain DSM 2475 / Hrk 5), this protein is tRNA N6-adenosine threonylcarbamoyltransferase.